Reading from the N-terminus, the 125-residue chain is Small ribosomal subunit protein bS6 (125 aa).

It belongs to the bacterial ribosomal protein bS6 family.

Binds together with bS18 to 16S ribosomal RNA. This Campylobacter jejuni subsp. jejuni serotype O:2 (strain ATCC 700819 / NCTC 11168) protein is Small ribosomal subunit protein bS6 (rpsF).